Reading from the N-terminus, the 273-residue chain is F-actin-capping protein subunit alpha (273 aa).

This sequence belongs to the F-actin-capping protein alpha subunit family. In terms of assembly, heterodimer of an alpha and a beta subunit.

It is found in the cytoplasm. The protein localises to the cytoskeleton. In terms of biological role, F-actin-capping proteins bind in a Ca(2+)-independent manner to the fast growing ends of actin filaments (barbed end) thereby blocking the exchange of subunits at these ends. Unlike other capping proteins (such as gelsolin and severin), these proteins do not sever actin filaments. The polypeptide is F-actin-capping protein subunit alpha (CAP1) (Gibberella zeae (strain ATCC MYA-4620 / CBS 123657 / FGSC 9075 / NRRL 31084 / PH-1) (Wheat head blight fungus)).